Reading from the N-terminus, the 279-residue chain is Ethanolamine utilization protein EutJ (279 aa).

The protein belongs to the EutJ family.

It participates in amine and polyamine degradation; ethanolamine degradation. In terms of biological role, may protect ethanolamine ammonia-lyase (EAL, eutB-eutC) from inhibition, may function in assembling the bacterial microcompartment and/or in refolding EAL, suggesting it may have chaperone activity. Overexpression of eutJ and eutS in E.coli leads to multiple BMC-like structures; eutS expression alone leads to 1 BMC-like structure per cell. Its function is as follows. Expression of the eut operon allows this bacteria to use ethanolamine (EA) as a carbon, nitrogen and energy source. It relies on cobalamin (vitamin B12) both as a cofactor for the ethanolamine ammonia-lyase (EAL) activity and to induce the operon. EA enhances bacterial survival in macrophages in a concentration-dependent manner, suggesting it is an important nutrient during infection. The chain is Ethanolamine utilization protein EutJ from Salmonella typhimurium (strain LT2 / SGSC1412 / ATCC 700720).